Reading from the N-terminus, the 491-residue chain is Nicotinamide phosphoribosyltransferase (491 aa).

At Met-1 the chain carries N-acetylmethionine. Phosphotyrosine is present on Tyr-188. Residue Arg-196 coordinates diphosphate. Asp-219 contacts beta-nicotinamide D-ribonucleotide. Residues His-247 and Arg-311 each contribute to the diphosphate site. Residues 311 to 313, 353 to 354, Gly-384, and Arg-392 contribute to the beta-nicotinamide D-ribonucleotide site; these read RPD and GD. Phosphoserine is present on Ser-472.

It belongs to the NAPRTase family. Homodimer. As to expression, ubiquitously expressed in lymphoid and non-lymphoid tissues.

Its subcellular location is the nucleus. It localises to the cytoplasm. The protein resides in the secreted. The catalysed reaction is beta-nicotinamide D-ribonucleotide + diphosphate = 5-phospho-alpha-D-ribose 1-diphosphate + nicotinamide + H(+). Its pathway is cofactor biosynthesis; NAD(+) biosynthesis; nicotinamide D-ribonucleotide from 5-phospho-alpha-D-ribose 1-diphosphate and nicotinamide: step 1/1. The secreted form behaves both as a cytokine with immunomodulating properties and an adipokine with anti-diabetic properties, it has no enzymatic activity, partly because of lack of activation by ATP, which has a low level in extracellular space and plasma. Catalyzes the condensation of nicotinamide with 5-phosphoribosyl-1-pyrophosphate to yield nicotinamide mononucleotide, an intermediate in the biosynthesis of NAD. It is the rate limiting component in the mammalian NAD biosynthesis pathway. Plays a role in the modulation of circadian clock function. NAMPT-dependent oscillatory production of NAD regulates oscillation of clock target gene expression by releasing the core clock component: CLOCK-BMAL1 heterodimer from NAD-dependent SIRT1-mediated suppression. The polypeptide is Nicotinamide phosphoribosyltransferase (Nampt) (Mus musculus (Mouse)).